The sequence spans 245 residues: 14-3-3 protein zeta/delta (245 aa).

Position 1 is an N-acetylmethionine (Met-1). Lys-3 carries the post-translational modification N6-acetyllysine. Position 58 is a phosphoserine; by PKA (Ser-58). N6-acetyllysine is present on Lys-68. A phosphoserine mark is found at Ser-184, Ser-207, and Ser-210. Thr-232 bears the Phosphothreonine; by CK1 mark.

Belongs to the 14-3-3 family. As to quaternary structure, homodimer. Heterodimerizes with YWHAE. Homo- and heterodimerization is inhibited by phosphorylation on Ser-58. Interacts with FOXO4, NOXA1, SSH1 ARHGEF2, CDK16 and BSPRY. Interacts with WEE1 (C-terminal). Interacts with MLF1 (phosphorylated form); the interaction retains it in the cytoplasm. Interacts with BAX; the interaction occurs in the cytoplasm. Under stress conditions, MAPK8-mediated phosphorylation releases BAX to mitochondria. Interacts with TP53; the interaction enhances p53 transcriptional activity. The Ser-58 phosphorylated form inhibits this interaction and p53 transcriptional activity. Interacts with ABL1 (phosphorylated form); the interaction retains ABL1 in the cytoplasm. Interacts with PKA-phosphorylated AANAT; the interaction modulates AANAT enzymatic activity by increasing affinity for arylalkylamines and acetyl-CoA and protecting the enzyme from dephosphorylation and proteasomal degradation. It may also prevent thiol-dependent inactivation. Interacts with AKT1; the interaction phosphorylates YWHAZ and modulates dimerization. Interacts with GAB2. Interacts with BCL2L11, SAMSN1 and TLK2. Interacts with phosphorylated RAF1; the interaction is inhibited when YWHAZ is phosphorylated on Thr-232. Interacts with Thr-phosphorylated ITGB2. Interacts with the 'Thr-369' phosphorylated form of DAPK2. Interacts with PI4KB, TBC1D22A and TBC1D22B. Interacts with ZFP36L1 (via phosphorylated form); this interaction occurs in a p38 MAPK- and AKT-signaling pathways. Interacts with SLITRK1. Interacts with AK5, LDB1, MADD, MARK3, PDE1A and SMARCB1. Interacts with YWHAZ. Interacts with MEFV. Interacts with ADAM22 (via C-terminus). In terms of processing, the delta, brain-specific form differs from the zeta form in being phosphorylated. Phosphorylation on Ser-184 by MAPK8; promotes dissociation of BAX and translocation of BAX to mitochondria. Phosphorylation on Thr-232; inhibits binding of RAF1. Phosphorylated on Ser-58 by PKA and protein kinase C delta type catalytic subunit in a sphingosine-dependent fashion. Phosphorylation on Ser-58 by PKA; disrupts homodimerization and heterodimerization with YHAE and TP53.

It is found in the cytoplasm. Its subcellular location is the melanosome. Adapter protein implicated in the regulation of a large spectrum of both general and specialized signaling pathways. Binds to a large number of partners, usually by recognition of a phosphoserine or phosphothreonine motif. Binding generally results in the modulation of the activity of the binding partner. Promotes cytosolic retention and inactivation of TFEB transcription factor by binding to phosphorylated TFEB. Induces ARHGEF7 activity on RAC1 as well as lamellipodia and membrane ruffle formation. In neurons, regulates spine maturation through the modulation of ARHGEF7 activity. The protein is 14-3-3 protein zeta/delta (YWHAZ) of Bos taurus (Bovine).